A 607-amino-acid chain; its full sequence is Cyclic-di-GMP receptor FimW (607 aa).

The interval 323–492 (ERTFQRTQGQ…GGTQMGIEMI (170 aa)) is pilZ-like domain. The short motif at 324-328 (RTFQR) is the RXXXR motif element. The D/NXSXXG motif signature appears at 435–440 (NHSPGG). A compositionally biased stretch (polar residues) spans 568–582 (SQFEYRSAEPVNTPS). The segment at 568–607 (SQFEYRSAEPVNTPSDKPVTAPVARPPAGEEDFDSLWKSL) is disordered.

As to quaternary structure, monomer in the absence of c-di-GMP. Forms dimers in the presence of c-di-GMP.

The protein resides in the cytoplasm. Functionally, high-affinity cyclic-di-GMP binding protein that regulates type IV pili (T4P) elongation. Required for T4P-mediated surface attachment and walking motility during the early phases of surface colonization. Not required for twitching motility. Does not bind related nucleotides such as GMP, GDP, GTP or ATP. The sequence is that of Cyclic-di-GMP receptor FimW from Pseudomonas aeruginosa (strain ATCC 15692 / DSM 22644 / CIP 104116 / JCM 14847 / LMG 12228 / 1C / PRS 101 / PAO1).